We begin with the raw amino-acid sequence, 367 residues long: Germination protease (367 aa).

The propeptide occupies 1 to 15 (MKEPLDLSKYSIRTD).

The protein belongs to the peptidase A25 family. Homotetramer. Post-translationally, autoproteolytically processed. The inactive tetrameric zymogen termed p46 autoprocesses to a smaller form termed p41, which is active only during spore germination.

The enzyme catalyses Endopeptidase action with P4 Glu or Asp, P1 preferably Glu &gt; Asp, P1' hydrophobic and P2' Ala.. In terms of biological role, initiates the rapid degradation of small, acid-soluble proteins during spore germination. In Bacillus cereus (strain ATCC 14579 / DSM 31 / CCUG 7414 / JCM 2152 / NBRC 15305 / NCIMB 9373 / NCTC 2599 / NRRL B-3711), this protein is Germination protease.